Here is a 146-residue protein sequence, read N- to C-terminus: Large ribosomal subunit protein uL15 (146 aa).

Positions 1 to 51 (MKLHELKPAKGSRKVRNRVGRGTSSGNGKTSGRGQKGQKARSGGGVRLGFE) are disordered. The span at 10-19 (KGSRKVRNRV) shows a compositional bias: basic residues. Gly residues-rich tracts occupy residues 23–35 (TSSGNGKTSGRGQ) and 42–51 (SGGGVRLGFE).

It belongs to the universal ribosomal protein uL15 family. In terms of assembly, part of the 50S ribosomal subunit.

Binds to the 23S rRNA. The polypeptide is Large ribosomal subunit protein uL15 (Streptococcus equi subsp. equi (strain 4047)).